The chain runs to 401 residues: Multidrug resistance protein MdtH (401 aa).

11 helical membrane passes run 13-33 (YFLL…FPLI), 34-54 (SIRF…ALGL), 99-116 (PWIL…GTLF), 139-159 (LLMM…SWLL), 165-185 (FVCW…VWLL), 214-234 (VLTL…LPIV), 243-263 (AAVK…LYPI), 277-297 (LMFG…ITHL), 299-319 (TLFM…PARE), 340-360 (LGLA…YDTG), and 368-388 (LPWF…YWQF).

It belongs to the major facilitator superfamily. DHA1 family. MdtH (TC 2.A.1.2.21) subfamily.

Its subcellular location is the cell inner membrane. In Yersinia enterocolitica serotype O:8 / biotype 1B (strain NCTC 13174 / 8081), this protein is Multidrug resistance protein MdtH.